Reading from the N-terminus, the 402-residue chain is Putative FBD-associated F-box protein At5g56690 (402 aa).

Positions 1–47 (MAEISGLPDDLLVKILAFLPTKVAISTSVLSKQWRFLWMWLPKLKYD) constitute an F-box domain. The 53-residue stretch at 349–401 (SWSKNQGSVPKCFLNSLETFRVKWYYSEEQEDRDFLSLIFKHARCLKSTSILH) folds into the FBD domain.

This is Putative FBD-associated F-box protein At5g56690 from Arabidopsis thaliana (Mouse-ear cress).